Here is a 433-residue protein sequence, read N- to C-terminus: Enolase (433 aa).

Glutamine 164 provides a ligand contact to (2R)-2-phosphoglycerate. Glutamate 206 acts as the Proton donor in catalysis. Positions 243, 289, and 316 each coordinate Mg(2+). (2R)-2-phosphoglycerate is bound by residues lysine 341, arginine 370, serine 371, and lysine 392. The Proton acceptor role is filled by lysine 341.

It belongs to the enolase family. Mg(2+) serves as cofactor.

The protein resides in the cytoplasm. Its subcellular location is the secreted. It localises to the cell surface. The catalysed reaction is (2R)-2-phosphoglycerate = phosphoenolpyruvate + H2O. It participates in carbohydrate degradation; glycolysis; pyruvate from D-glyceraldehyde 3-phosphate: step 4/5. Functionally, catalyzes the reversible conversion of 2-phosphoglycerate (2-PG) into phosphoenolpyruvate (PEP). It is essential for the degradation of carbohydrates via glycolysis. The chain is Enolase from Borreliella afzelii (strain PKo) (Borrelia afzelii).